Reading from the N-terminus, the 166-residue chain is Large ribosomal subunit protein uL11 (166 aa).

Belongs to the universal ribosomal protein uL11 family.

The sequence is that of Large ribosomal subunit protein uL11 (rpl12) from Dictyostelium discoideum (Social amoeba).